Here is a 1404-residue protein sequence, read N- to C-terminus: DNA-directed RNA polymerase subunit beta' (1404 aa).

Residues Cys-70, Cys-72, Cys-85, and Cys-88 each coordinate Zn(2+). The Mg(2+) site is built by Asp-460, Asp-462, and Asp-464. Positions 814, 889, 896, and 899 each coordinate Zn(2+). Residues 1377–1404 (DSEMETLSGKPAAAEPVAAVADAGADEE) are disordered. The segment covering 1387-1404 (PAAAEPVAAVADAGADEE) has biased composition (low complexity).

Belongs to the RNA polymerase beta' chain family. As to quaternary structure, the RNAP catalytic core consists of 2 alpha, 1 beta, 1 beta' and 1 omega subunit. When a sigma factor is associated with the core the holoenzyme is formed, which can initiate transcription. The cofactor is Mg(2+). Zn(2+) serves as cofactor.

It carries out the reaction RNA(n) + a ribonucleoside 5'-triphosphate = RNA(n+1) + diphosphate. DNA-dependent RNA polymerase catalyzes the transcription of DNA into RNA using the four ribonucleoside triphosphates as substrates. The chain is DNA-directed RNA polymerase subunit beta' from Xanthomonas euvesicatoria pv. vesicatoria (strain 85-10) (Xanthomonas campestris pv. vesicatoria).